A 200-amino-acid chain; its full sequence is MTVVIGLTGGIASGKSTVSQMFRELSIPVIDADIIAREVVEKGKPAYNKIVEVFGTEVLQEDGELDRPKLGSVVFYNEEKRLQLNKIVHPAVREEMNRRKEMYIKEGMQAVVLDIPLLFESKLTSLVDRVLVVAVKPHTQLERLMKRNNFSEEEATARIQSQMPLEEKVKNADEVINNDGTIMGTKTQLQAILKKWNIID.

The region spanning 4–200 (VIGLTGGIAS…AILKKWNIID (197 aa)) is the DPCK domain. ATP is bound at residue 12–17 (ASGKST).

This sequence belongs to the CoaE family.

Its subcellular location is the cytoplasm. The enzyme catalyses 3'-dephospho-CoA + ATP = ADP + CoA + H(+). Its pathway is cofactor biosynthesis; coenzyme A biosynthesis; CoA from (R)-pantothenate: step 5/5. Functionally, catalyzes the phosphorylation of the 3'-hydroxyl group of dephosphocoenzyme A to form coenzyme A. This Bacillus thuringiensis subsp. konkukian (strain 97-27) protein is Dephospho-CoA kinase.